Reading from the N-terminus, the 287-residue chain is CRISPR-associated endoribonuclease Cas6 1 (287 aa).

The protein belongs to the CRISPR-associated endoribonuclease Cas6 family. Part of the aCascade ribonucleoprotein complex, minimally composed of Csa2 and Cas5a, which binds crRNA. Other possible components of aCascade in strain P1 are Cas6b (SSO1437) and Csa5 (SSO1443), while SSO1399, Cas5b (SSO1400) and SSO1401 have sometimes been seen weakly associated. Csa2 is probably the major RNA-binding subunit. The Csa2-Cas5a-crRNA complex also binds target DNA homologous to crRNA, probably forming an R-loop. Purified aCascade forms a filament about 6 nm in width.

In terms of biological role, CRISPR (clustered regularly interspaced short palindromic repeat) is an adaptive immune system that provides protection against mobile genetic elements (viruses, transposable elements and conjugative plasmids). CRISPR clusters contain spacers, sequences complementary to antecedent mobile elements, and target invading nucleic acids. CRISPR clusters are transcribed and processed into CRISPR RNA (crRNA). The polypeptide is CRISPR-associated endoribonuclease Cas6 1 (cas6a) (Saccharolobus solfataricus (strain ATCC 35092 / DSM 1617 / JCM 11322 / P2) (Sulfolobus solfataricus)).